The following is a 391-amino-acid chain: ATPase GET3C (391 aa).

The transit peptide at 1 to 50 directs the protein to the mitochondrion; it reads MAALLLLNRVSRSTSSISLHRVAGTLGFNSFNAQIHGDRISGTLFRVRSL. Residue 77–84 participates in ATP binding; the sequence is KGGVGKTS. D106 is an active-site residue. N328 is a binding site for ATP.

This sequence belongs to the arsA ATPase family.

It localises to the mitochondrion matrix. It carries out the reaction ATP + H2O = ADP + phosphate + H(+). In Arabidopsis thaliana (Mouse-ear cress), this protein is ATPase GET3C.